Reading from the N-terminus, the 196-residue chain is Imidazoleglycerol-phosphate dehydratase (196 aa).

The protein belongs to the imidazoleglycerol-phosphate dehydratase family.

The protein resides in the cytoplasm. The enzyme catalyses D-erythro-1-(imidazol-4-yl)glycerol 3-phosphate = 3-(imidazol-4-yl)-2-oxopropyl phosphate + H2O. The protein operates within amino-acid biosynthesis; L-histidine biosynthesis; L-histidine from 5-phospho-alpha-D-ribose 1-diphosphate: step 6/9. The polypeptide is Imidazoleglycerol-phosphate dehydratase (Phenylobacterium zucineum (strain HLK1)).